The sequence spans 386 residues: 3-ketoacyl-CoA thiolase (386 aa).

The Acyl-thioester intermediate role is filled by cysteine 91. Active-site proton acceptor residues include histidine 342 and cysteine 372.

This sequence belongs to the thiolase-like superfamily. Thiolase family. Heterotetramer of two alpha chains (FadB) and two beta chains (FadA).

It localises to the cytoplasm. The enzyme catalyses an acyl-CoA + acetyl-CoA = a 3-oxoacyl-CoA + CoA. The protein operates within lipid metabolism; fatty acid beta-oxidation. Its function is as follows. Catalyzes the final step of fatty acid oxidation in which acetyl-CoA is released and the CoA ester of a fatty acid two carbons shorter is formed. This Pseudoalteromonas atlantica (strain T6c / ATCC BAA-1087) protein is 3-ketoacyl-CoA thiolase.